Consider the following 444-residue polypeptide: UDP-N-acetylmuramoylalanine--D-glutamate ligase (444 aa).

Residue 109–115 (GSNGKTT) coordinates ATP.

The protein belongs to the MurCDEF family.

It is found in the cytoplasm. The enzyme catalyses UDP-N-acetyl-alpha-D-muramoyl-L-alanine + D-glutamate + ATP = UDP-N-acetyl-alpha-D-muramoyl-L-alanyl-D-glutamate + ADP + phosphate + H(+). It functions in the pathway cell wall biogenesis; peptidoglycan biosynthesis. In terms of biological role, cell wall formation. Catalyzes the addition of glutamate to the nucleotide precursor UDP-N-acetylmuramoyl-L-alanine (UMA). The protein is UDP-N-acetylmuramoylalanine--D-glutamate ligase of Bacteroides thetaiotaomicron (strain ATCC 29148 / DSM 2079 / JCM 5827 / CCUG 10774 / NCTC 10582 / VPI-5482 / E50).